We begin with the raw amino-acid sequence, 146 residues long: Hemoglobin subunit beta (146 aa).

The Globin domain maps to 2–146 (HWSAEEKQLI…VAHALARKYH (145 aa)). Heme b is bound by residues histidine 63 and histidine 92.

This sequence belongs to the globin family. Heterotetramer of two alpha chains and two beta chains. As to expression, red blood cells.

Its function is as follows. Involved in oxygen transport from the lung to the various peripheral tissues. This is Hemoglobin subunit beta (HBB) from Stercorarius maccormicki (South polar skua).